The sequence spans 387 residues: Protein-glutamate methylesterase/protein-glutamine glutaminase 2 (387 aa).

A Response regulatory domain is found at 4–121 (KVLVVDDSGF…SRNPQKVKQL (118 aa)). 4-aspartylphosphate is present on aspartate 55. Positions 148 to 183 (AAPAAPTSSSRAPAPTTAPARAVPTRTAAPATAPAA) are enriched in low complexity. The disordered stretch occupies residues 148 to 199 (AAPAAPTSSSRAPAPTTAPARAVPTRTAAPATAPAAHAHHAPAHPTTSGTPK). The CheB-type methylesterase domain maps to 192 to 384 (PTTSGTPKRK…LDDIGRHLVE (193 aa)). Active-site residues include serine 211, histidine 238, and aspartate 331.

It belongs to the CheB family. In terms of processing, phosphorylated by CheA. Phosphorylation of the N-terminal regulatory domain activates the methylesterase activity.

The protein localises to the cytoplasm. It carries out the reaction [protein]-L-glutamate 5-O-methyl ester + H2O = L-glutamyl-[protein] + methanol + H(+). The enzyme catalyses L-glutaminyl-[protein] + H2O = L-glutamyl-[protein] + NH4(+). Its function is as follows. Involved in chemotaxis. Part of a chemotaxis signal transduction system that modulates chemotaxis in response to various stimuli. Catalyzes the demethylation of specific methylglutamate residues introduced into the chemoreceptors (methyl-accepting chemotaxis proteins or MCP) by CheR. Also mediates the irreversible deamidation of specific glutamine residues to glutamic acid. The chain is Protein-glutamate methylesterase/protein-glutamine glutaminase 2 from Pseudomonas savastanoi pv. phaseolicola (strain 1448A / Race 6) (Pseudomonas syringae pv. phaseolicola (strain 1448A / Race 6)).